A 177-amino-acid polypeptide reads, in one-letter code: ATP-dependent protease subunit HslV (177 aa).

Thr6 is an active-site residue. Na(+) contacts are provided by Ala162, Cys165, and Thr168.

The protein belongs to the peptidase T1B family. HslV subfamily. As to quaternary structure, a double ring-shaped homohexamer of HslV is capped on each side by a ring-shaped HslU homohexamer. The assembly of the HslU/HslV complex is dependent on binding of ATP.

Its subcellular location is the cytoplasm. The catalysed reaction is ATP-dependent cleavage of peptide bonds with broad specificity.. With respect to regulation, allosterically activated by HslU binding. Protease subunit of a proteasome-like degradation complex believed to be a general protein degrading machinery. This Desulfovibrio desulfuricans (strain ATCC 27774 / DSM 6949 / MB) protein is ATP-dependent protease subunit HslV.